Consider the following 290-residue polypeptide: Protease HtpX homolog (290 aa).

2 helical membrane-spanning segments follow: residues 4 to 24 and 39 to 59; these read ILLF…VASL and TALL…SLLI. A Zn(2+)-binding site is contributed by His144. Residue Glu145 is part of the active site. Residue His148 participates in Zn(2+) binding. 2 consecutive transmembrane segments (helical) span residues 159 to 179 and 199 to 219; these read LIQG…GYAV and VSTI…VAWF. A Zn(2+)-binding site is contributed by Glu224.

This sequence belongs to the peptidase M48B family. Zn(2+) serves as cofactor.

The protein resides in the cell inner membrane. This chain is Protease HtpX homolog, found in Variovorax paradoxus (strain S110).